We begin with the raw amino-acid sequence, 322 residues long: ATP-dependent 6-phosphofructokinase (322 aa).

Position 13 (G13) interacts with ATP. R23 to R27 contacts ADP. ATP-binding positions include R74–C75 and G104–S107. D105 is a binding site for Mg(2+). A substrate-binding site is contributed by T127–D129. Residue D129 is the Proton acceptor of the active site. R156 contributes to the ADP binding site. Substrate is bound by residues R164 and M171–R173. ADP-binding positions include G187 to E189 and K215 to H217. Residues E224, R246, and H252–R255 each bind substrate.

This sequence belongs to the phosphofructokinase type A (PFKA) family. ATP-dependent PFK group I subfamily. Prokaryotic clade 'B1' sub-subfamily. In terms of assembly, homotetramer. Mg(2+) is required as a cofactor.

Its subcellular location is the cytoplasm. The enzyme catalyses beta-D-fructose 6-phosphate + ATP = beta-D-fructose 1,6-bisphosphate + ADP + H(+). Its pathway is carbohydrate degradation; glycolysis; D-glyceraldehyde 3-phosphate and glycerone phosphate from D-glucose: step 3/4. Its activity is regulated as follows. Allosterically activated by ADP and other diphosphonucleosides, and allosterically inhibited by phosphoenolpyruvate. Its function is as follows. Catalyzes the phosphorylation of D-fructose 6-phosphate to fructose 1,6-bisphosphate by ATP, the first committing step of glycolysis. The polypeptide is ATP-dependent 6-phosphofructokinase (Paenibacillus macquariensis (Bacillus macquariensis)).